We begin with the raw amino-acid sequence, 380 residues long: Cytochrome b (380 aa).

4 consecutive transmembrane segments (helical) span residues 34–54 (FGSL…LLAA), 78–99 (WLIR…YLHI), 114–134 (WNTG…GYVL), and 179–199 (FFTL…IHLT). Residues histidine 84 and histidine 98 each coordinate heme b. The heme b site is built by histidine 183 and histidine 197. Position 202 (histidine 202) interacts with a ubiquinone. Transmembrane regions (helical) follow at residues 227–247 (TKDI…ALFS), 289–309 (LGGV…PLLH), 321–341 (LSQL…WIGS), and 348–368 (FIII…ILFP).

It belongs to the cytochrome b family. As to quaternary structure, the cytochrome bc1 complex contains 11 subunits: 3 respiratory subunits (MT-CYB, CYC1 and UQCRFS1), 2 core proteins (UQCRC1 and UQCRC2) and 6 low-molecular weight proteins (UQCRH/QCR6, UQCRB/QCR7, UQCRQ/QCR8, UQCR10/QCR9, UQCR11/QCR10 and a cleavage product of UQCRFS1). This cytochrome bc1 complex then forms a dimer. Heme b serves as cofactor.

It is found in the mitochondrion inner membrane. Functionally, component of the ubiquinol-cytochrome c reductase complex (complex III or cytochrome b-c1 complex) that is part of the mitochondrial respiratory chain. The b-c1 complex mediates electron transfer from ubiquinol to cytochrome c. Contributes to the generation of a proton gradient across the mitochondrial membrane that is then used for ATP synthesis. This is Cytochrome b (MT-CYB) from Eudyptes chrysocome (Western rockhopper penguin).